The following is a 396-amino-acid chain: MEAVKEAVRKIKSLVIPHADEKDNGIVFEIKLNETDQRVEKWGLDPSLDFFEVTGNCNLGRPNSEGSNQSLMGSVTIRNIFNPKLDDLLSKIEYVRFLEAVKKPRNRTFKTSFFNSRKLSPVFTGGPGYEDLVPPMFVGRDCLKATITENLTRQRELTYGVMFEEIITRDENRRISENGLLLSPDGGISINGPPTTLSGTGIDHIATLQANITRDNTKLVNGAVVGEKNIFQVDQGLGIGNNFPLFNRHQLSLTSFIQLKQVEEGSDKPQPPVLVLHGRYGGCIGDLPSYDVFALGGPNSVRGYSMGELGAAKNILELGAEIRIPVKNTHVYAFAEHGNDLGSSKDVKGNPTGLYRKMGHGSSYGLGVKLGMVRAEYTVRHNRGTGALFLRFGERY.

The Chloroplast intermembrane segment spans residues 1 to 23; that stretch reads MEAVKEAVRKIKSLVIPHADEKD. Residues 24 to 32 traverse the membrane as a beta stranded segment; that stretch reads NGIVFEIKL. At 33-87 the chain is on the cytoplasmic side; sequence NETDQRVEKWGLDPSLDFFEVTGNCNLGRPNSEGSNQSLMGSVTIRNIFNPKLDD. The chain crosses the membrane as a beta stranded span at residues 88–96; the sequence is LLSKIEYVR. Residues 97 to 140 are Chloroplast intermembrane-facing; the sequence is FLEAVKKPRNRTFKTSFFNSRKLSPVFTGGPGYEDLVPPMFVGR. A beta stranded transmembrane segment spans residues 141–148; the sequence is DCLKATIT. Residues 149–156 lie on the Cytoplasmic side of the membrane; that stretch reads ENLTRQRE. The chain crosses the membrane as a beta stranded span at residues 157–164; sequence LTYGVMFE. Topologically, residues 165 to 271 are chloroplast intermembrane; that stretch reads EIITRDENRR…VEEGSDKPQP (107 aa). Residues 272 to 280 traverse the membrane as a beta stranded segment; sequence PVLVLHGRY. Over 281-292 the chain is Cytoplasmic; the sequence is GGCIGDLPSYDV. Residues 293–301 traverse the membrane as a beta stranded segment; it reads FALGGPNSV. The Chloroplast intermembrane segment spans residues 302 to 363; that stretch reads RGYSMGELGA…LYRKMGHGSS (62 aa). Residues 364–370 traverse the membrane as a beta stranded segment; that stretch reads YGLGVKL. Residues 371–384 lie on the Cytoplasmic side of the membrane; it reads GMVRAEYTVRHNRG. The beta stranded transmembrane segment at 385–392 threads the bilayer; sequence TGALFLRF. The Chloroplast intermembrane segment spans residues 393–396; it reads GERY.

This sequence belongs to the TOC75 family. Part of the TOC core complex that includes a protein for the specific recognition of transit peptides surrounded by a ring composed of four proteins forming translocation channels, and four to five GTP-binding proteins providing energy. This core complex can interact with components of the TIC complex to form a larger import complex. Chloroplastic protein precursors also interacts with these complexes. As to expression, expressed ubiquitously at low levels.

It is found in the plastid. Its subcellular location is the chloroplast outer membrane. Mediates the insertion of proteins targeted to the outer membrane of chloroplasts. Required for the import of protein precursors into chloroplasts. Forms the voltage-dependent preprotein translocation channels (hydrophilic beta barrel) of the TOC complex in the chloroplastic outer membrane. Required for etioplast formation and/or etioplast-chloroplast transition during deetiolation. In Arabidopsis thaliana (Mouse-ear cress), this protein is Protein TOC75-4, chloroplastic (TOC75-4).